Here is a 208-residue protein sequence, read N- to C-terminus: Protein-L-isoaspartate O-methyltransferase (208 aa).

Residue Ser-59 is part of the active site.

This sequence belongs to the methyltransferase superfamily. L-isoaspartyl/D-aspartyl protein methyltransferase family.

The protein localises to the cytoplasm. The enzyme catalyses [protein]-L-isoaspartate + S-adenosyl-L-methionine = [protein]-L-isoaspartate alpha-methyl ester + S-adenosyl-L-homocysteine. Catalyzes the methyl esterification of L-isoaspartyl residues in peptides and proteins that result from spontaneous decomposition of normal L-aspartyl and L-asparaginyl residues. It plays a role in the repair and/or degradation of damaged proteins. In Klebsiella pneumoniae (strain 342), this protein is Protein-L-isoaspartate O-methyltransferase.